A 518-amino-acid polypeptide reads, in one-letter code: Retinal dehydrogenase 2 (518 aa).

At Tyr-168 the chain carries Phosphotyrosine. NAD(+) contacts are provided by residues 184–186, 210–213, and 264–266; these read IPW, KPAE, and STE. Catalysis depends on Glu-286, which acts as the Proton acceptor. Cys-320 serves as the catalytic Nucleophile. The residue at position 351 (Ser-351) is a Phosphoserine. NAD(+) is bound by residues 366–370 and Glu-417; that span reads KQYNK.

It belongs to the aldehyde dehydrogenase family. In terms of assembly, homotetramer. As to expression, found in testis and less abundantly in lung, brain, heart, liver and kidney.

It localises to the cytoplasm. It carries out the reaction retinal + NAD(+) + H2O = retinoate + NADH + 2 H(+). The catalysed reaction is all-trans-retinal + NAD(+) + H2O = all-trans-retinoate + NADH + 2 H(+). It catalyses the reaction all-trans-13,14-dihydroretinal + NAD(+) + H2O = all-trans-13,14-dihydroretinoate + NADH + 2 H(+). It functions in the pathway cofactor metabolism; retinol metabolism. Functionally, catalyzes the NAD-dependent oxidation of aldehyde substrates, such as all-trans-retinal and all-trans-13,14-dihydroretinal, to their corresponding carboxylic acids, all-trans-retinoate and all-trans-13,14-dihydroretinoate, respectively. Retinoate signaling is critical for the transcriptional control of many genes, for instance it is crucial for initiation of meiosis in both male and female. Recognizes retinal as substrate, both in its free form and when bound to cellular retinol-binding protein. Lacks activity with benzaldehyde, acetaldehyde and octanal. Displays complete lack of activity with citral. The polypeptide is Retinal dehydrogenase 2 (Aldh1a2) (Rattus norvegicus (Rat)).